A 110-amino-acid chain; its full sequence is Protein E7 (110 aa).

The segment at 1–47 (MHGPKPTVQEIVLELCPYNEIQPVDLVCHEQLGDSDDEIDEPDHAVN) is E7 terminal domain. The LXCXE motif; interaction with host RB1 and TMEM173/STING motif lies at 26-30 (LVCHE). A zinc finger lies at 69-105 (CCKCNKALQLVVEASRDNLRTLQQLFMDSLNFVCPWC). The short motif at 87 to 95 (LRTLQQLFM) is the Nuclear export signal element.

It belongs to the papillomaviridae E7 protein family. In terms of assembly, homodimer. Homooligomer. Interacts with host RB1; this interaction induces dissociation of RB1-E2F1 complex thereby disrupting RB1 activity. Interacts with host EP300; this interaction represses EP300 transcriptional activity. Interacts with protein E2; this interaction inhibits E7 oncogenic activity. Interacts with host TMEM173/STING; this interaction impairs the ability of TMEM173/STING to sense cytosolic DNA and promote the production of type I interferon (IFN-alpha and IFN-beta). In terms of processing, highly phosphorylated.

It localises to the host cytoplasm. Its subcellular location is the host nucleus. In terms of biological role, plays a role in viral genome replication by driving entry of quiescent cells into the cell cycle. Stimulation of progression from G1 to S phase allows the virus to efficiently use the cellular DNA replicating machinery to achieve viral genome replication. E7 protein has both transforming and trans-activating activities. Induces the disassembly of the E2F1 transcription factor from RB1, with subsequent transcriptional activation of E2F1-regulated S-phase genes. Interferes with host histone deacetylation mediated by HDAC1 and HDAC2, leading to transcription activation. Also plays a role in the inhibition of both antiviral and antiproliferative functions of host interferon alpha. Interaction with host TMEM173/STING impairs the ability of TMEM173/STING to sense cytosolic DNA and promote the production of type I interferon (IFN-alpha and IFN-beta). The sequence is that of Protein E7 from Human papillomavirus 68.